A 173-amino-acid polypeptide reads, in one-letter code: Nicotinamide-nucleotide adenylyltransferase (173 aa).

It belongs to the archaeal NMN adenylyltransferase family.

It is found in the cytoplasm. It catalyses the reaction beta-nicotinamide D-ribonucleotide + ATP + H(+) = diphosphate + NAD(+). It functions in the pathway cofactor biosynthesis; NAD(+) biosynthesis; NAD(+) from nicotinamide D-ribonucleotide: step 1/1. This chain is Nicotinamide-nucleotide adenylyltransferase, found in Methanosarcina barkeri (strain Fusaro / DSM 804).